A 102-amino-acid polypeptide reads, in one-letter code: Crustacean hyperglycemic hormones 3 (102 aa).

The N-terminal stretch at 1–22 (MIALRLIAVTLVVAMAASTTWA) is a signal peptide. 3 disulfides stabilise this stretch: Cys-35-Cys-71, Cys-51-Cys-67, and Cys-54-Cys-80. Val-100 is modified (valine amide).

Belongs to the arthropod CHH/MIH/GIH/VIH hormone family.

It localises to the secreted. In terms of biological role, hormone found in the sinus gland of isopods and decapods which controls the blood sugar level. Has a secretagogue action over the amylase released from the midgut gland. May act as a stress hormone and may be involved in the control of molting and reproduction. The protein is Crustacean hyperglycemic hormones 3 (CHH3) of Penaeus monodon (Giant tiger prawn).